The following is a 250-amino-acid chain: 3-deoxy-manno-octulosonate cytidylyltransferase (250 aa).

It belongs to the KdsB family.

It localises to the cytoplasm. The enzyme catalyses 3-deoxy-alpha-D-manno-oct-2-ulosonate + CTP = CMP-3-deoxy-beta-D-manno-octulosonate + diphosphate. Its pathway is nucleotide-sugar biosynthesis; CMP-3-deoxy-D-manno-octulosonate biosynthesis; CMP-3-deoxy-D-manno-octulosonate from 3-deoxy-D-manno-octulosonate and CTP: step 1/1. It functions in the pathway bacterial outer membrane biogenesis; lipopolysaccharide biosynthesis. Activates KDO (a required 8-carbon sugar) for incorporation into bacterial lipopolysaccharide in Gram-negative bacteria. The polypeptide is 3-deoxy-manno-octulosonate cytidylyltransferase (Legionella pneumophila (strain Corby)).